We begin with the raw amino-acid sequence, 287 residues long: ATP synthase gamma chain (287 aa).

Belongs to the ATPase gamma chain family. F-type ATPases have 2 components, CF(1) - the catalytic core - and CF(0) - the membrane proton channel. CF(1) has five subunits: alpha(3), beta(3), gamma(1), delta(1), epsilon(1). CF(0) has three main subunits: a, b and c.

Its subcellular location is the cell inner membrane. Functionally, produces ATP from ADP in the presence of a proton gradient across the membrane. The gamma chain is believed to be important in regulating ATPase activity and the flow of protons through the CF(0) complex. The chain is ATP synthase gamma chain from Escherichia coli (strain 55989 / EAEC).